Here is a 65-residue protein sequence, read N- to C-terminus: Large ribosomal subunit protein bL28 (65 aa).

Residues 1 to 26 are disordered; that stretch reads MARRDALTGKSALSGQSRSHALNATK. Polar residues predominate over residues 11–22; that stretch reads SALSGQSRSHAL.

This sequence belongs to the bacterial ribosomal protein bL28 family.

This chain is Large ribosomal subunit protein bL28, found in Mycoplasma mycoides subsp. mycoides SC (strain CCUG 32753 / NCTC 10114 / PG1).